Reading from the N-terminus, the 552-residue chain is E3 ubiquitin-protein ligase MGRN1 (552 aa).

G2 carries N-myristoyl glycine lipidation. Residues 278–317 (CVVCLSDLRDTLILPCRHLCLCTSCADTLRYQANNCPICR) form an RING-type zinc finger. Residues 355–384 (SCPFKKSKPHPASLASKKPKRETNSDSVPP) are disordered. A Required for TSG101-binding motif is present at residues 406–409 (PSAP). Y411 is modified (phosphotyrosine). The tract at residues 439 to 552 (SSRQKGRPQS…PDSCSVGIDE (114 aa)) is disordered. Residues 450–460 (APDSTLRSPSS) show a composition bias toward polar residues. Residues 464–475 (EEDEEKLSEDVD) show a composition bias toward acidic residues. At S471 the chain carries Phosphoserine. Over residues 504-523 (SSSPQQGTRAASIENVLQDS) the composition is skewed to polar residues. Phosphoserine is present on S524.

As to quaternary structure, interacts with MC1R and MC4R, but not with TBXA2R. Interacts with TSG101. Interacts with mislocalized cytosolically exposed PRNP; this interaction alters MGRN1 subcellular location and causes lysosomal enlargement. Post-translationally, autoubiquitinated in vitro.

It is found in the early endosome. The protein localises to the cytoplasm. Its subcellular location is the cytosol. It localises to the nucleus. The protein resides in the cell membrane. The catalysed reaction is S-ubiquitinyl-[E2 ubiquitin-conjugating enzyme]-L-cysteine + [acceptor protein]-L-lysine = [E2 ubiquitin-conjugating enzyme]-L-cysteine + N(6)-ubiquitinyl-[acceptor protein]-L-lysine.. It functions in the pathway protein modification; protein ubiquitination. E3 ubiquitin-protein ligase. Mediates monoubiquitination at multiple sites of TSG101 in the presence of UBE2D1, but not of UBE2G1, nor UBE2H. Plays a role in the regulation of endosome-to-lysosome trafficking. Impairs MC1R- and MC4R-signaling by competing with GNAS-binding to MCRs and inhibiting agonist-induced cAMP production. Does not inhibit ADRB2-signaling. Does not promote MC1R ubiquitination. Acts also as a negative regulator of hedgehog signaling. This Homo sapiens (Human) protein is E3 ubiquitin-protein ligase MGRN1 (MGRN1).